The chain runs to 306 residues: Polyadenylate-binding protein 2 (306 aa).

The span at 1-12 (MAAAAAAAAAAG) shows a compositional bias: low complexity. Positions 1–115 (MAAAAAAAAA…EGDPGDGAIE (115 aa)) are disordered. Position 2 is an N-acetylalanine (Ala2). Residues 2-145 (AAAAAAAAAA…LKELQNEVEK (144 aa)) are interaction with SKIP. Arg17 is subject to Omega-N-methylarginine. Ser19 carries the phosphoserine modification. Residues 30–47 (GAGGEAGEGAPGGAGDYG) show a composition bias toward gly residues. Over residues 51-72 (ESEELEPEELLLEPEPEPEPEE) the composition is skewed to acidic residues. Ser52 bears the Phosphoserine mark. Pro residues predominate over residues 77–87 (PRAPPGAPGPG). Residues 115 to 151 (EDPELEAIKARVREMEEEAEKLKELQNEVEKQMNMSP) are a coiled coil. A stimulates PAPOLA region spans residues 119-147 (LEAIKARVREMEEEAEKLKELQNEVEKQM). 2 positions are modified to phosphoserine: Ser150 and Ser235. Residues 155–306 (NAGPVIMSIE…ARATSWYSPY (152 aa)) form a necessary for homooligomerization region. An RRM domain is found at 172–249 (RSIYVGNVDY…RQIKVIPKRT (78 aa)). 3 positions are modified to asymmetric dimethylarginine; alternate: Arg238, Arg259, and Arg263. Arg238, Arg259, and Arg263 each carry omega-N-methylarginine; alternate. Arg265, Arg267, Arg269, Arg277, Arg279, Arg287, Arg289, Arg291, Arg294, Arg296, and Arg298 each carry asymmetric dimethylarginine. Positions 286–306 (SRPRGRVYRGRARATSWYSPY) are interaction with PAPOLA.

Monomer and homooligomer. Binds RNA as a monomer and oligomerizes when bound to poly(A). Associates in a ternary complex with CPSF4 and NS/NS1 and interaction with NS/NS1, blocks nuclear export of host cell mRNAs. Associates in a single complex with SKIP and MYOD1 and interacts with SKIP in differentiated myocytes. Interacts with NUDT21/CPSF5. Identified in a IGF2BP1-dependent mRNP granule complex containing untranslated mRNAs. Interacts with PAPOLA, but only in presence of oligo(A) RNA. Interacts with transportin. May interact with SETX. Interacts (via RRM domain and C-terminal arginine-rich region) with ZFP36 (via hypophosphorylated form); this interaction occurs in the nucleus in a RNA-independent manner, decreases in presence of single-stranded poly(A) RNA-oligomer and in a p38-dependent-manner and may down-regulated RNA poly(A) polymerase activity. Component of the poly(A) tail exosome targeting (PAXT) complex composed of PABPN1, ZFC3H1 and MTREX. Interacts with ZFC3H1 in a RNase-insensitive manner. Interacts with FRG1. Interacts with ZC3H11A. In terms of processing, arginine dimethylation is asymmetric and involves PRMT1 and PRMT3. It does not influence the RNA binding properties. In terms of tissue distribution, ubiquitous.

The protein localises to the nucleus. It localises to the cytoplasm. The protein resides in the nucleus speckle. Functionally, involved in the 3'-end formation of mRNA precursors (pre-mRNA) by the addition of a poly(A) tail of 200-250 nt to the upstream cleavage product. Stimulates poly(A) polymerase (PAPOLA) conferring processivity on the poly(A) tail elongation reaction and also controls the poly(A) tail length. Increases the affinity of poly(A) polymerase for RNA. Is also present at various stages of mRNA metabolism including nucleocytoplasmic trafficking and nonsense-mediated decay (NMD) of mRNA. Cooperates with SKIP to synergistically activate E-box-mediated transcription through MYOD1 and may regulate the expression of muscle-specific genes. Binds to poly(A) and to poly(G) with high affinity. May protect the poly(A) tail from degradation. Subunit of the trimeric poly(A) tail exosome targeting (PAXT) complex, a complex that directs a subset of long and polyadenylated poly(A) RNAs for exosomal degradation. The RNA exosome is fundamental for the degradation of RNA in eukaryotic nuclei. Substrate targeting is facilitated by its cofactor MTREX, which links to RNA-binding protein adapters. In Bos taurus (Bovine), this protein is Polyadenylate-binding protein 2 (PABPN1).